A 479-amino-acid polypeptide reads, in one-letter code: Probable periplasmic serine endoprotease DegP-like (479 aa).

The signal sequence occupies residues 1–27 (MSIPRLKSYLSMFAAVLMLGQVLSAQA). Catalysis depends on charge relay system residues His117, Asp147, and Ser220. Substrate contacts are provided by residues 218–220 (GNS) and 275–279 (LGVVI). PDZ domains follow at residues 264–355 (LKKD…IRNG) and 361–468 (DVTI…LRQG). Residues 368-395 (PDDDADIGTGTGADGSAERSSNRLGVSV) form a disordered region.

Belongs to the peptidase S1C family.

It is found in the periplasm. It catalyses the reaction Acts on substrates that are at least partially unfolded. The cleavage site P1 residue is normally between a pair of hydrophobic residues, such as Val-|-Val.. Functionally, might be efficient in the degradation of transiently denatured and unfolded proteins which accumulate in the periplasm following stress conditions. The chain is Probable periplasmic serine endoprotease DegP-like from Pseudomonas putida (strain W619).